Consider the following 102-residue polypeptide: A-type ATP synthase subunit F (102 aa).

This sequence belongs to the V-ATPase F subunit family. In terms of assembly, has multiple subunits with at least A(3), B(3), C, D, E, F, H, I and proteolipid K(x).

The protein localises to the cell membrane. In terms of biological role, component of the A-type ATP synthase that produces ATP from ADP in the presence of a proton gradient across the membrane. The chain is A-type ATP synthase subunit F from Thermococcus kodakarensis (strain ATCC BAA-918 / JCM 12380 / KOD1) (Pyrococcus kodakaraensis (strain KOD1)).